We begin with the raw amino-acid sequence, 547 residues long: CTP synthase (547 aa).

The segment at 1-265 is amidoligase domain; the sequence is MTKFVFVTGG…DRIVCEKLAL (265 aa). Position 13 (S13) interacts with CTP. UTP is bound at residue S13. Residues 14–19 and D71 contribute to the ATP site; that span reads SLGKGI. The Mg(2+) site is built by D71 and E139. CTP contacts are provided by residues 146–148, 186–191, and K222; these read DIE and KTKPTQ. Residues 186-191 and K222 each bind UTP; that span reads KTKPTQ. One can recognise a Glutamine amidotransferase type-1 domain in the interval 290–542; sequence TIGMVGKYVD…IKAALAHKHA (253 aa). Residue G351 participates in L-glutamine binding. The active-site Nucleophile; for glutamine hydrolysis is the C378. L-glutamine contacts are provided by residues 379–382, E402, and R468; that span reads LGMQ. Catalysis depends on residues H515 and E517.

This sequence belongs to the CTP synthase family. Homotetramer.

The catalysed reaction is UTP + L-glutamine + ATP + H2O = CTP + L-glutamate + ADP + phosphate + 2 H(+). The enzyme catalyses L-glutamine + H2O = L-glutamate + NH4(+). It catalyses the reaction UTP + NH4(+) + ATP = CTP + ADP + phosphate + 2 H(+). Its pathway is pyrimidine metabolism; CTP biosynthesis via de novo pathway; CTP from UDP: step 2/2. With respect to regulation, allosterically activated by GTP, when glutamine is the substrate; GTP has no effect on the reaction when ammonia is the substrate. The allosteric effector GTP functions by stabilizing the protein conformation that binds the tetrahedral intermediate(s) formed during glutamine hydrolysis. Inhibited by the product CTP, via allosteric rather than competitive inhibition. Its function is as follows. Catalyzes the ATP-dependent amination of UTP to CTP with either L-glutamine or ammonia as the source of nitrogen. Regulates intracellular CTP levels through interactions with the four ribonucleotide triphosphates. The polypeptide is CTP synthase (Janthinobacterium sp. (strain Marseille) (Minibacterium massiliensis)).